The primary structure comprises 62 residues: Protein A37.5 homolog (62 aa).

It belongs to the orthopoxviruses A37.5 protein family.

In Homo sapiens (Human), this protein is Protein A37.5 homolog (A40_5R).